We begin with the raw amino-acid sequence, 153 residues long: uncharacterized protein (153 aa).

2 helical membrane-spanning segments follow: residues 16–36 and 97–117; these read ILAC…ILEI and ALTT…CIIC.

Its subcellular location is the membrane. This is an uncharacterized protein from Human herpesvirus 6A (strain Uganda-1102) (HHV-6 variant A).